The chain runs to 332 residues: Ribosomal RNA small subunit methyltransferase H (332 aa).

S-adenosyl-L-methionine-binding positions include Gly-39–Tyr-41, Asp-56, Phe-83, Asp-100, and Gln-107.

Belongs to the methyltransferase superfamily. RsmH family.

It localises to the cytoplasm. It catalyses the reaction cytidine(1402) in 16S rRNA + S-adenosyl-L-methionine = N(4)-methylcytidine(1402) in 16S rRNA + S-adenosyl-L-homocysteine + H(+). Functionally, specifically methylates the N4 position of cytidine in position 1402 (C1402) of 16S rRNA. The protein is Ribosomal RNA small subunit methyltransferase H of Bartonella quintana (strain Toulouse) (Rochalimaea quintana).